The primary structure comprises 423 residues: UPF0597 protein TTE0269 (423 aa).

This sequence belongs to the UPF0597 family.

In Caldanaerobacter subterraneus subsp. tengcongensis (strain DSM 15242 / JCM 11007 / NBRC 100824 / MB4) (Thermoanaerobacter tengcongensis), this protein is UPF0597 protein TTE0269.